We begin with the raw amino-acid sequence, 489 residues long: Zinc finger protein 58 (489 aa).

Residues 2–73 (LSFWDVAIDF…KRQAAAAVHP (72 aa)) form the KRAB domain. Residues 78-100 (NKCKDFSKAFFCKSLLTQHQRIR) form a C2H2-type 1; degenerate zinc finger. 14 C2H2-type zinc fingers span residues 106 to 128 (FKCEECGKAFNNRSNLSEHKRIH), 134 to 156 (YKCEECGKAFRIRSKLSTHQRVH), 162 to 184 (YKCEECGKAFNSHSNLSEHKRIH), 190 to 212 (YKCEECGKAFSTRSTYYRHQKNH), 218 to 240 (YKCEECAKEFSYPSLLKVHQRIH), 246 to 268 (YKCEECGKPFYCPLLLKKHQIIH), 274 to 296 (YKCAECGKAFHYPSLLKRHQRIH), 302 to 324 (CKCKDCDRAFYSSAFLKRHQRIH), 330 to 352 (YKCGECGKRFCSFPHLQYHQRFH), 358 to 380 (YKCEQCGKTFSTLSYLPWHKLRH), 386 to 408 (YKCEKCGKMFYSTLDLKKHQKIH), 410 to 432 (YKCGECHYGFPNYAALTAHQRVH), 438 to 460 (HVCEQCGKDFSRIDSLNQHQLVH), and 466 to 488 (YKCEKCGKCFYRSSSLKRHQGIH).

The protein belongs to the krueppel C2H2-type zinc-finger protein family. In terms of tissue distribution, expressed in liver, testis and, at considerably lower levels, in brain, spleen and heart.

The protein resides in the nucleus. May have a role during differentiation processes. The sequence is that of Zinc finger protein 58 (Zfp58) from Mus musculus (Mouse).